Consider the following 643-residue polypeptide: Phosphomethylpyrimidine synthase (643 aa).

Residues N248, M277, Y306, H342, S362 to G364, D403 to R406, and E442 each bind substrate. H446 contacts Zn(2+). Residue Y469 coordinates substrate. A Zn(2+)-binding site is contributed by H510. 3 residues coordinate [4Fe-4S] cluster: C590, C593, and C598.

This sequence belongs to the ThiC family. In terms of assembly, homodimer. It depends on [4Fe-4S] cluster as a cofactor.

It carries out the reaction 5-amino-1-(5-phospho-beta-D-ribosyl)imidazole + S-adenosyl-L-methionine = 4-amino-2-methyl-5-(phosphooxymethyl)pyrimidine + CO + 5'-deoxyadenosine + formate + L-methionine + 3 H(+). It functions in the pathway cofactor biosynthesis; thiamine diphosphate biosynthesis. Catalyzes the synthesis of the hydroxymethylpyrimidine phosphate (HMP-P) moiety of thiamine from aminoimidazole ribotide (AIR) in a radical S-adenosyl-L-methionine (SAM)-dependent reaction. In Burkholderia ambifaria (strain ATCC BAA-244 / DSM 16087 / CCUG 44356 / LMG 19182 / AMMD) (Burkholderia cepacia (strain AMMD)), this protein is Phosphomethylpyrimidine synthase.